We begin with the raw amino-acid sequence, 168 residues long: MSELIIGVDPGTIVAGYAIIAVEQRYQLRPYSYGAIRLSSDMPLPMRYKTLFEQLSGVLDDTQPNAMVLETQFVNKNPQSTMKLAMARGIVLLAAAQRDILIFEYAPNVAKKAVVGKGHASKRQVQVMVSKILNVPEVLHPSNEDIADAFALAICHTHVARSPLCGVR.

Active-site residues include D9, E70, and D145. Mg(2+) is bound by residues D9, E70, and D145.

Belongs to the RuvC family. In terms of assembly, homodimer which binds Holliday junction (HJ) DNA. The HJ becomes 2-fold symmetrical on binding to RuvC with unstacked arms; it has a different conformation from HJ DNA in complex with RuvA. In the full resolvosome a probable DNA-RuvA(4)-RuvB(12)-RuvC(2) complex forms which resolves the HJ. Mg(2+) serves as cofactor.

It localises to the cytoplasm. It catalyses the reaction Endonucleolytic cleavage at a junction such as a reciprocal single-stranded crossover between two homologous DNA duplexes (Holliday junction).. In terms of biological role, the RuvA-RuvB-RuvC complex processes Holliday junction (HJ) DNA during genetic recombination and DNA repair. Endonuclease that resolves HJ intermediates. Cleaves cruciform DNA by making single-stranded nicks across the HJ at symmetrical positions within the homologous arms, yielding a 5'-phosphate and a 3'-hydroxyl group; requires a central core of homology in the junction. The consensus cleavage sequence is 5'-(A/T)TT(C/G)-3'. Cleavage occurs on the 3'-side of the TT dinucleotide at the point of strand exchange. HJ branch migration catalyzed by RuvA-RuvB allows RuvC to scan DNA until it finds its consensus sequence, where it cleaves and resolves the cruciform DNA. This Chlamydia pneumoniae (Chlamydophila pneumoniae) protein is Crossover junction endodeoxyribonuclease RuvC.